Here is a 303-residue protein sequence, read N- to C-terminus: MMSESNKQQAVNKLTEIVANFTAMISTRMPDDVVDKLKQLKDAETSSMGKIIYHTMFDNMQKAIDLNRPACQDTGEIMFFVKVGSRFPLLGELQSILKQAVEEATIKAPLRHNAVEIFDEVNTGKNTGSGVPWVTWDIVPDGDDAEIEVYMAGGGCTLPGRSKVLMPSEGYEGVVKFVFENISTLAVNACPPVLVGVGIATSVETAAVLSRKAILRPIGSRHPNPKAAELELRLEEGLNRLGIGPQGLTGNSSVMGVHIESAARHPSTIGVAVSTGCWAHRRGTLLVHADLTFENLSHTRSAL.

Iron-sulfur cluster is bound by residues Cys71, Cys190, and Cys277.

It belongs to the class-I fumarase family. In terms of assembly, tetramer of two alpha and two beta subunits. Iron-sulfur cluster serves as cofactor.

It catalyses the reaction (2R,3R)-tartrate = oxaloacetate + H2O. The polypeptide is L(+)-tartrate dehydratase subunit alpha (ttdA) (Escherichia coli O157:H7).